The chain runs to 94 residues: Large ribosomal subunit protein eL36 (94 aa).

The segment covering 1-25 (MKNAYKKVRVRYPVKRPDVKRKQRG) has biased composition (basic residues). A disordered region spans residues 1-30 (MKNAYKKVRVRYPVKRPDVKRKQRGPRAET).

It belongs to the eukaryotic ribosomal protein eL36 family. As to quaternary structure, component of the large ribosomal subunit.

The protein resides in the cytoplasm. The polypeptide is Large ribosomal subunit protein eL36 (RPL36) (Encephalitozoon cuniculi (strain GB-M1) (Microsporidian parasite)).